Consider the following 246-residue polypeptide: MLESEVSKQITTPLAAPAFPRGPYRFHNREYLNIIYRTDLDALRKIVPEPLELDGAYVRFEMMAMPDTTGLGSYTECGQAIPVKYNEVKGDYLHMMYLDNEPAIAVGRESSAYPKKFGYPKLFVDSDALVGALKYGALPVVTATMGYKHEPLDLKEAYTQIARPNFMLKIIQGYDGKPRICELICAENTDITIHGAWTGSARLQLFSHALAPLADLPVLEIVSASHILTDLTLGTPKVVHDYLSVK.

The active-site Schiff-base intermediate with acetoacetate is K115.

This sequence belongs to the ADC family.

The catalysed reaction is acetoacetate + H(+) = acetone + CO2. In terms of biological role, catalyzes the conversion of acetoacetate to acetone and carbon dioxide. This is Acetoacetate decarboxylase from Clostridium beijerinckii (Clostridium MP).